The sequence spans 469 residues: 3-isopropylmalate dehydratase large subunit (469 aa).

The [4Fe-4S] cluster site is built by cysteine 347, cysteine 407, and cysteine 410.

This sequence belongs to the aconitase/IPM isomerase family. LeuC type 1 subfamily. Heterodimer of LeuC and LeuD. The cofactor is [4Fe-4S] cluster.

It catalyses the reaction (2R,3S)-3-isopropylmalate = (2S)-2-isopropylmalate. It functions in the pathway amino-acid biosynthesis; L-leucine biosynthesis; L-leucine from 3-methyl-2-oxobutanoate: step 2/4. Its function is as follows. Catalyzes the isomerization between 2-isopropylmalate and 3-isopropylmalate, via the formation of 2-isopropylmaleate. In Prochlorococcus marinus (strain NATL1A), this protein is 3-isopropylmalate dehydratase large subunit.